The chain runs to 187 residues: Imidazoleglycerol-phosphate dehydratase (187 aa).

The protein belongs to the imidazoleglycerol-phosphate dehydratase family.

It localises to the cytoplasm. It catalyses the reaction D-erythro-1-(imidazol-4-yl)glycerol 3-phosphate = 3-(imidazol-4-yl)-2-oxopropyl phosphate + H2O. It participates in amino-acid biosynthesis; L-histidine biosynthesis; L-histidine from 5-phospho-alpha-D-ribose 1-diphosphate: step 6/9. This Pyrobaculum calidifontis (strain DSM 21063 / JCM 11548 / VA1) protein is Imidazoleglycerol-phosphate dehydratase.